Consider the following 106-residue polypeptide: Ribosomal protein eL42-like (106 aa).

Positions 26–53 are disordered; that stretch reads YKKGKDSLYAQGRRRYDRKQSGYGGQTK. An N6-methyllysine modification is found at K53.

It belongs to the eukaryotic ribosomal protein eL42 family. In terms of tissue distribution, ubiquitously expressed.

It localises to the cytoplasm. In Homo sapiens (Human), this protein is Ribosomal protein eL42-like (RPL36AL).